Consider the following 133-residue polypeptide: ATP synthase epsilon chain, chloroplastic (133 aa).

Belongs to the ATPase epsilon chain family. F-type ATPases have 2 components, CF(1) - the catalytic core - and CF(0) - the membrane proton channel. CF(1) has five subunits: alpha(3), beta(3), gamma(1), delta(1), epsilon(1). CF(0) has three main subunits: a, b and c.

It localises to the plastid. It is found in the chloroplast thylakoid membrane. Functionally, produces ATP from ADP in the presence of a proton gradient across the membrane. This Psilotum nudum (Whisk fern) protein is ATP synthase epsilon chain, chloroplastic.